The chain runs to 299 residues: Cytidine deaminase (299 aa).

2 CMP/dCMP-type deaminase domains span residues 56-176 (SKIE…FGPK) and 194-299 (LQGD…YIAV). 97 to 99 (NQE) serves as a coordination point for substrate. Residue histidine 110 participates in Zn(2+) binding. Glutamate 112 serves as the catalytic Proton donor. Residues cysteine 137 and cysteine 140 each coordinate Zn(2+).

It belongs to the cytidine and deoxycytidylate deaminase family. In terms of assembly, homodimer. Zn(2+) is required as a cofactor.

The catalysed reaction is cytidine + H2O + H(+) = uridine + NH4(+). It carries out the reaction 2'-deoxycytidine + H2O + H(+) = 2'-deoxyuridine + NH4(+). Its function is as follows. This enzyme scavenges exogenous and endogenous cytidine and 2'-deoxycytidine for UMP synthesis. In Haemophilus ducreyi (strain 35000HP / ATCC 700724), this protein is Cytidine deaminase.